A 197-amino-acid polypeptide reads, in one-letter code: MSTILIAIIALAALAAVFGAILGFASIRFKVEADPIVDQIDSILPQTQCGQCGYPGCRPYAEAIANGDQINKCPPGGQATIEKLADLMGVEAEESAHDLDSKVKTVAFIHEDMCIGCTKCIQACPVDAIVGGTKALHTVIKDECTGCDLCVAPCPTDCIEMIPVETTTESWKWKLNAIPVVNITDAANAANVTDSIK.

The interval 1–26 is hydrophobic; the sequence is MSTILIAIIALAALAAVFGAILGFAS. The 59-residue stretch at 32–90 folds into the 4Fe-4S domain; it reads EADPIVDQIDSILPQTQCGQCGYPGCRPYAEAIANGDQINKCPPGGQATIEKLADLMGV. Residues Cys49, Cys52, Cys57, Cys73, Cys114, Cys117, Cys120, Cys124, Cys144, Cys147, Cys150, and Cys154 each coordinate [4Fe-4S] cluster. 4Fe-4S ferredoxin-type domains are found at residues 105–134 and 135–164; these read TVAF…GGTK and ALHT…MIPV.

The protein belongs to the 4Fe4S bacterial-type ferredoxin family. RnfB subfamily. In terms of assembly, the complex is composed of six subunits: RnfA, RnfB, RnfC, RnfD, RnfE and RnfG. [4Fe-4S] cluster is required as a cofactor.

It localises to the cell inner membrane. Its function is as follows. Part of a membrane-bound complex that couples electron transfer with translocation of ions across the membrane. The sequence is that of Ion-translocating oxidoreductase complex subunit B from Vibrio campbellii (strain ATCC BAA-1116).